A 78-amino-acid polypeptide reads, in one-letter code: Small ribosomal subunit protein bS16c (78 aa).

This sequence belongs to the bacterial ribosomal protein bS16 family.

The protein localises to the plastid. It is found in the chloroplast. The polypeptide is Small ribosomal subunit protein bS16c (Adiantum capillus-veneris (Maidenhair fern)).